We begin with the raw amino-acid sequence, 610 residues long: Tyrosine-protein kinase Drl (610 aa).

The N-terminal stretch at 1-20 is a signal peptide; that stretch reads MAPNLLTIGLLLTLIASGQA. At 21–242 the chain is on the extracellular side; that stretch reads HLNIFLNLHE…RENLVPPASG (222 aa). A WIF domain is found at 24–155; the sequence is IFLNLHEVLR…NLIFKRKKIC (132 aa). 3 N-linked (GlcNAc...) asparagine glycosylation sites follow: Asn63, Asn99, and Asn143. The disordered stretch occupies residues 202-230; sequence QAPEKQRPVVTESPVGRGNSGGSKRDFDP. The chain crosses the membrane as a helical span at residues 243–263; it reads LVTLIVGGILALVLVSTLILI. Over 264 to 610 the chain is Cytoplasmic; that stretch reads AYCAKGPSKR…EFHTQITRYV (347 aa). A Protein kinase domain is found at 343–606; that stretch reads VRLSCLVQEG…ICLSEFHTQI (264 aa). Residues 349-357 and Lys371 contribute to the ATP site; that span reads VQEGNFGRI. Asp468 (proton acceptor) is an active-site residue. Tyr498 is modified (phosphotyrosine; by autocatalysis).

Belongs to the protein kinase superfamily. Tyr protein kinase family. In the embryonic abdominal hemisegment, expression is restricted to cell body, axon and growth cone of a cluster of 20 ventral nerve cord interneurons. During muscle growth and attachment events in the embryonic abdominal hemisegment, expression is in somatic muscle fibers 21-23 at 10-13 hours and 2 patches of approximately 15 neighboring epidermal cells (dorsal and ventral attachment sites) at 6-13 hours.

The protein resides in the cell membrane. The catalysed reaction is L-tyrosyl-[protein] + ATP = O-phospho-L-tyrosyl-[protein] + ADP + H(+). In terms of biological role, probable coreceptor of Wnt proteins. Involved in neuronal pathway recognition and ventral muscle attachment site selection. Non-vital for development. May be part of a signal transduction cascade involved in learning and possibly memory. The protein is Tyrosine-protein kinase Drl (drl) of Drosophila melanogaster (Fruit fly).